The chain runs to 551 residues: Dihydroxy-acid dehydratase (551 aa).

Aspartate 78 contacts Mg(2+). Cysteine 119 is a [2Fe-2S] cluster binding site. Mg(2+)-binding residues include aspartate 120 and lysine 121. N6-carboxylysine is present on lysine 121. Residue cysteine 191 participates in [2Fe-2S] cluster binding. Residue glutamate 441 coordinates Mg(2+). Catalysis depends on serine 467, which acts as the Proton acceptor.

The protein belongs to the IlvD/Edd family. In terms of assembly, homodimer. It depends on [2Fe-2S] cluster as a cofactor. Requires Mg(2+) as cofactor.

The catalysed reaction is (2R)-2,3-dihydroxy-3-methylbutanoate = 3-methyl-2-oxobutanoate + H2O. It carries out the reaction (2R,3R)-2,3-dihydroxy-3-methylpentanoate = (S)-3-methyl-2-oxopentanoate + H2O. It functions in the pathway amino-acid biosynthesis; L-isoleucine biosynthesis; L-isoleucine from 2-oxobutanoate: step 3/4. The protein operates within amino-acid biosynthesis; L-valine biosynthesis; L-valine from pyruvate: step 3/4. In terms of biological role, functions in the biosynthesis of branched-chain amino acids. Catalyzes the dehydration of (2R,3R)-2,3-dihydroxy-3-methylpentanoate (2,3-dihydroxy-3-methylvalerate) into 2-oxo-3-methylpentanoate (2-oxo-3-methylvalerate) and of (2R)-2,3-dihydroxy-3-methylbutanoate (2,3-dihydroxyisovalerate) into 2-oxo-3-methylbutanoate (2-oxoisovalerate), the penultimate precursor to L-isoleucine and L-valine, respectively. The polypeptide is Dihydroxy-acid dehydratase (Pyrococcus abyssi (strain GE5 / Orsay)).